Reading from the N-terminus, the 245-residue chain is Cytochrome P450 CYP82H23 (245 aa).

This sequence belongs to the cytochrome P450 family. It depends on heme as a cofactor.

Functionally, probable heme-thiolate monooxygenase. In Panax ginseng (Korean ginseng), this protein is Cytochrome P450 CYP82H23.